Here is a 514-residue protein sequence, read N- to C-terminus: Nuclear hormone receptor family member nhr-85 (514 aa).

The interval 28–48 is disordered; it reads TSFSSPPATSSSSLLSPSPSS. Residues 110-186 constitute a DNA-binding region (nuclear receptor); sequence TILCQVCSDK…VGMSRDAVRF (77 aa). NR C4-type zinc fingers lie at residues 113–133 and 150–174; these read CQVC…CEGC and CTRA…LKKC. One can recognise an NR LBD domain in the interval 216-514; the sequence is QYENLTEVMH…VSPVPTTLSE (299 aa). A disordered region spans residues 465-514; sequence ERPRRISSSGAQEPLNLSLPHVRHQVKRDVDSDEQLEEMKVSPVPTTLSE.

Belongs to the nuclear hormone receptor family.

Its subcellular location is the nucleus. Functionally, orphan nuclear receptor. In Caenorhabditis elegans, this protein is Nuclear hormone receptor family member nhr-85 (nhr-85).